A 658-amino-acid chain; its full sequence is Threonine--tRNA ligase (658 aa).

A TGS domain is found at 1–61 (MSDVRVTVQR…AAGDVVEPIT (61 aa)). Residues 259–554 (DHRRLGAELD…LLEHYAGALP (296 aa)) are catalytic. 3 residues coordinate Zn(2+): C353, H404, and H531.

It belongs to the class-II aminoacyl-tRNA synthetase family. In terms of assembly, homodimer. Zn(2+) is required as a cofactor.

It localises to the cytoplasm. The catalysed reaction is tRNA(Thr) + L-threonine + ATP = L-threonyl-tRNA(Thr) + AMP + diphosphate + H(+). Its function is as follows. Catalyzes the attachment of threonine to tRNA(Thr) in a two-step reaction: L-threonine is first activated by ATP to form Thr-AMP and then transferred to the acceptor end of tRNA(Thr). Also edits incorrectly charged L-seryl-tRNA(Thr). The polypeptide is Threonine--tRNA ligase (Parafrankia sp. (strain EAN1pec)).